The following is an 842-amino-acid chain: DNA mismatch repair protein MutS (842 aa).

596-603 (GPNMSGKS) serves as a coordination point for ATP.

This sequence belongs to the DNA mismatch repair MutS family.

In terms of biological role, this protein is involved in the repair of mismatches in DNA. It is possible that it carries out the mismatch recognition step. This protein has a weak ATPase activity. The polypeptide is DNA mismatch repair protein MutS (Exiguobacterium sp. (strain ATCC BAA-1283 / AT1b)).